The chain runs to 188 residues: Archaetidylinositol phosphate synthase (188 aa).

2 helical membrane-spanning segments follow: residues 20-40 (LASL…ITLL) and 51-71 (ILAG…GALA). Mg(2+) contacts are provided by Asp64, Asp67, Asp85, and Asp89. Catalysis depends on Asp89, which acts as the Proton acceptor. A run of 2 helical transmembrane segments spans residues 96-116 (ILFG…LTLI) and 147-167 (IIII…YLVA).

The protein belongs to the CDP-alcohol phosphatidyltransferase class-I family. It depends on Mn(2+) as a cofactor. The cofactor is Mg(2+).

It is found in the cell membrane. It catalyses the reaction CDP-2,3-bis-O-(phytanyl)-sn-glycerol + 1D-myo-inositol 3-phosphate = saturated 1-archaetidyl-1D-myo-inositol 3-phosphate + CMP + H(+). The protein operates within lipid metabolism; phospholipid metabolism. In terms of biological role, catalyzes the formation of archaetidylinositol phosphate (AIP) from CDP-archaeol (CDP-ArOH or CDP-2,3-bis-(O-phytanyl)-sn-glycerol) and 1L-myo-inositol 1-phosphate (IP or 1D-myo-inositol 3-phosphate). AIP is a precursor of archaetidyl-myo-inositol (AI), an ether-type inositol phospholipid ubiquitously distributed in archaea membranes and essential for glycolipid biosynthesis in archaea. This is Archaetidylinositol phosphate synthase from Pyrococcus horikoshii (strain ATCC 700860 / DSM 12428 / JCM 9974 / NBRC 100139 / OT-3).